Here is a 343-residue protein sequence, read N- to C-terminus: L-threonine 3-dehydrogenase (343 aa).

Cys38 contacts Zn(2+). Residues Thr40 and His43 each act as charge relay system in the active site. The Zn(2+) site is built by His63, Glu64, Cys93, Cys96, Cys99, and Cys107. NAD(+)-binding positions include Ile175, Asp195, Arg200, Leu262–Ile264, and Ile286–Tyr287.

This sequence belongs to the zinc-containing alcohol dehydrogenase family. As to quaternary structure, homotetramer. Zn(2+) serves as cofactor.

It is found in the cytoplasm. It carries out the reaction L-threonine + NAD(+) = (2S)-2-amino-3-oxobutanoate + NADH + H(+). Its pathway is amino-acid degradation; L-threonine degradation via oxydo-reductase pathway; glycine from L-threonine: step 1/2. Functionally, catalyzes the NAD(+)-dependent oxidation of L-threonine to 2-amino-3-ketobutyrate. This is L-threonine 3-dehydrogenase from Pectobacterium carotovorum subsp. carotovorum (strain PC1).